The sequence spans 357 residues: Protein FAM118A (357 aa).

Met-1 is modified (N-acetylmethionine). The chain crosses the membrane as a helical span at residues 30 to 50 (LLLVIGTGVSAAVAPGIPALC). Ser-311 bears the Phosphoserine mark.

The protein belongs to the FAM118 family.

The protein resides in the membrane. The polypeptide is Protein FAM118A (FAM118A) (Homo sapiens (Human)).